The sequence spans 610 residues: Dihydroxy-acid dehydratase (610 aa).

Residue Asp-81 participates in Mg(2+) binding. Cys-122 lines the [2Fe-2S] cluster pocket. Mg(2+)-binding residues include Asp-123 and Lys-124. Lys-124 carries the post-translational modification N6-carboxylysine. Cys-193 serves as a coordination point for [2Fe-2S] cluster. Glu-489 is a binding site for Mg(2+). Ser-515 acts as the Proton acceptor in catalysis.

This sequence belongs to the IlvD/Edd family. In terms of assembly, homodimer. Requires [2Fe-2S] cluster as cofactor. The cofactor is Mg(2+).

The catalysed reaction is (2R)-2,3-dihydroxy-3-methylbutanoate = 3-methyl-2-oxobutanoate + H2O. The enzyme catalyses (2R,3R)-2,3-dihydroxy-3-methylpentanoate = (S)-3-methyl-2-oxopentanoate + H2O. It participates in amino-acid biosynthesis; L-isoleucine biosynthesis; L-isoleucine from 2-oxobutanoate: step 3/4. The protein operates within amino-acid biosynthesis; L-valine biosynthesis; L-valine from pyruvate: step 3/4. Functions in the biosynthesis of branched-chain amino acids. Catalyzes the dehydration of (2R,3R)-2,3-dihydroxy-3-methylpentanoate (2,3-dihydroxy-3-methylvalerate) into 2-oxo-3-methylpentanoate (2-oxo-3-methylvalerate) and of (2R)-2,3-dihydroxy-3-methylbutanoate (2,3-dihydroxyisovalerate) into 2-oxo-3-methylbutanoate (2-oxoisovalerate), the penultimate precursor to L-isoleucine and L-valine, respectively. This Xylella fastidiosa (strain M23) protein is Dihydroxy-acid dehydratase.